Reading from the N-terminus, the 175-residue chain is MLQTWAKLAYEANLGIVYGSTLIILLLPLIGSFMPPNLVSSISKLNAFTLLESYLLPVLSNFGIFGGLALGVGSAIAFSVLNSIASSFLNLSFNQQQALTIVVALLVSQFIFGGWATFALFLTSMLGSVPPVPGLAVIMSFITPFIDGLIATLGGLMVVLSILYELSEIGLVTLP.

4 helical membrane passes run 14–34, 58–78, 101–121, and 142–162; these read LGIV…GSFM, VLSN…AIAF, IVVA…FALF, and ITPF…VLSI.

It is found in the host membrane. This is Putative transmembrane protein ORF175 from Acidianus two-tailed virus (ATV).